A 730-amino-acid polypeptide reads, in one-letter code: uncharacterized protein (730 aa).

Phosphoserine is present on residues Ser82 and Ser89. Disordered regions lie at residues Ser82–Tyr114 and Asn447–Glu468. Residues Ser89–Asn98 show a composition bias toward polar residues. Over residues Asn449 to Asn460 the composition is skewed to low complexity. Ser483 and Ser651 each carry phosphoserine.

This is an uncharacterized protein from Saccharomyces cerevisiae (strain ATCC 204508 / S288c) (Baker's yeast).